The sequence spans 1025 residues: Multidrug resistance protein MdtC (1025 aa).

The next 12 helical transmembrane spans lie at 3-23 (FFAL…AITL), 333-353 (EVEQ…FLFL), 360-380 (IIPA…MYLC), 387-407 (LSLM…IVVL), 431-451 (VGFT…PLLL), 463-483 (FAVT…TLTP), 528-548 (LVGV…ISIP), 853-873 (VILI…LYES), 875-895 (VHPL…LLAL), 897-917 (LFNA…IGIV), 953-973 (PIMM…LSGG), and 984-1004 (ITIV…TPVV).

It belongs to the resistance-nodulation-cell division (RND) (TC 2.A.6) family. MdtC subfamily. Part of a tripartite efflux system composed of MdtA, MdtB and MdtC. MdtC forms a heteromultimer with MdtB.

Its subcellular location is the cell inner membrane. Functionally, the MdtABC tripartite complex confers resistance against novobiocin and deoxycholate. The polypeptide is Multidrug resistance protein MdtC (Escherichia coli (strain 55989 / EAEC)).